The chain runs to 1577 residues: Probable serine/threonine-protein kinase gdt9 (1577 aa).

Residues methionine 1–glycine 16 form the signal peptide. The Extracellular segment spans residues isoleucine 17 to valine 966. A helical membrane pass occupies residues isoleucine 967–phenylalanine 987. Topologically, residues isoleucine 988–asparagine 1577 are cytoplasmic. Over residues asparagine 998–aspartate 1014 the composition is skewed to basic and acidic residues. Disordered regions lie at residues asparagine 998–glutamate 1019 and threonine 1050–isoleucine 1128. Over residues threonine 1050–valine 1082 the composition is skewed to polar residues. Over residues asparagine 1091–asparagine 1115 the composition is skewed to low complexity. The 284-residue stretch at leucine 1290–phenylalanine 1573 folds into the Protein kinase domain. Residues cysteine 1296–valine 1304 and lysine 1317 each bind ATP. The active-site Proton acceptor is the aspartate 1436.

The protein in the N-terminal section; belongs to the GDT family. This sequence in the C-terminal section; belongs to the protein kinase superfamily. TKL Ser/Thr protein kinase family.

The protein localises to the membrane. It carries out the reaction L-seryl-[protein] + ATP = O-phospho-L-seryl-[protein] + ADP + H(+). It catalyses the reaction L-threonyl-[protein] + ATP = O-phospho-L-threonyl-[protein] + ADP + H(+). The polypeptide is Probable serine/threonine-protein kinase gdt9 (gdt9) (Dictyostelium discoideum (Social amoeba)).